A 506-amino-acid chain; its full sequence is Hippocampus abundant transcript-like protein 1 (506 aa).

The tract at residues 1 to 25 (MSVEPPPELEEKAASEPEAGAMPEK) is disordered. The Extracellular segment spans residues 1 to 49 (MSVEPPPELEEKAASEPEAGAMPEKRAGAQAAGSTWLQGFGRPSVYHAA). The helical transmembrane segment at 50 to 70 (IVIFLEFFAWGLLTTPMLTVL) threads the bilayer. Over 71 to 82 (HETFSQHTFLMN) the chain is Cytoplasmic. A helical transmembrane segment spans residues 83–103 (GLIQGVKGLLSFLSAPLIGAL). At 104–111 (SDVWGRKP) the chain is on the extracellular side. Residues 112-132 (FLLGTVFFTCFPIPLMRISPW) form a helical membrane-spanning segment. The Cytoplasmic segment spans residues 133–134 (WY). A helical membrane pass occupies residues 135–155 (FAMISVSGVFSVTFSVIFAYV). Topologically, residues 156-168 (ADVTQEHERSTAY) are extracellular. The helical transmembrane segment at 169-189 (GWVSATFAASLVSSPAIGAYL) threads the bilayer. Topologically, residues 190-196 (SASYGDS) are cytoplasmic. A helical transmembrane segment spans residues 197-217 (LVVLVATVVALLDICFILVAV). The Extracellular segment spans residues 218-255 (PESLPEKMRPVSWGAQISWKQADPFASLKKVGKDSTVL). Residues 256 to 276 (LICITVFLSYLPEAGQYSSFF) traverse the membrane as a helical segment. The Cytoplasmic segment spans residues 277-281 (LYLRQ). The chain crosses the membrane as a helical span at residues 282-302 (VIGFGSVKIAAFIAMVGILSI). Residues 303-319 (VAQTAFLSILMRSLGNK) are Extracellular-facing. The helical transmembrane segment at 320-340 (NTVLLGLGFQMLQLAWYGFGS) threads the bilayer. A topological domain (cytoplasmic) is located at residue glutamine 341. The chain crosses the membrane as a helical span at residues 342–362 (AWMMWAAGTVAAMSSITFPAI). Topologically, residues 363-387 (SALVSRNAESDQQGVAQGIITGIRG) are extracellular. A helical transmembrane segment spans residues 388–408 (LCNGLGPALYGFIFYMFHVEL). Residues 409–428 (TELGPKLNSNNVPLQGAVIP) are Cytoplasmic-facing. Residues 429 to 449 (GPPFLFGACIVLMSFLVALFI) form a helical membrane-spanning segment. Residues 450–506 (PEYSKASGVQKHSNSSSGSLTNTPERGSDEDIEPLLQDSSIWELSSFEEPGNQCTEL) lie on the Extracellular side of the membrane. The interval 457–481 (GVQKHSNSSSGSLTNTPERGSDEDI) is disordered. Residues 459-474 (QKHSNSSSGSLTNTPE) are compositionally biased toward polar residues. Asparagine 463 carries N-linked (GlcNAc...) asparagine glycosylation.

Belongs to the major facilitator superfamily.

It is found in the membrane. This is Hippocampus abundant transcript-like protein 1 from Homo sapiens (Human).